A 438-amino-acid chain; its full sequence is Plasmalemma vesicle-associated protein (438 aa).

The Cytoplasmic portion of the chain corresponds to 1-26; the sequence is MGLSMDRSPYARTGDQQRGCWYYLRY. The helical; Signal-anchor for type II membrane protein transmembrane segment at 27–47 threads the bilayer; the sequence is FFLFVSLIQFLIILGLVLFMI. Over 48–438 the chain is Extracellular; the sequence is YGNVHATTES…VVNPAAQPSG (391 aa). N-linked (GlcNAc...) asparagine glycosylation is found at N82, N88, N112, and N150. 3 coiled-coil regions span residues 140–160, 189–224, and 281–383; these read KQCQ…LFKL, KRQT…QSLC, and EELA…ISAL. The disordered stretch occupies residues 391 to 413; sequence SLPAVPPRVSGPPPNPPPIDPAS. The segment covering 394 to 410 has biased composition (pro residues); it reads AVPPRVSGPPPNPPPID.

Homodimer. As to expression, expressed in lung, kidney, spleen, heart, muscle, eye, pancreas, thyroid, thymus, submaxillary gland, prostate, epididymis, uterus and liver.

It is found in the cell membrane. It localises to the membrane. The protein localises to the caveola. The protein resides in the cytoplasm. Its subcellular location is the perinuclear region. Functionally, endothelial cell-specific membrane protein involved in the formation of the diaphragms that bridge endothelial fenestrae. It is also required for the formation of stomata of caveolae and transendothelial channels. Functions in microvascular permeability, endothelial fenestrae contributing to the passage of water and solutes and regulating transcellular versus paracellular flow in different organs. Plays a specific role in embryonic development. The protein is Plasmalemma vesicle-associated protein (Plvap) of Mus musculus (Mouse).